Here is a 308-residue protein sequence, read N- to C-terminus: Glutaminase 2 (308 aa).

Positions 66, 117, 161, 168, 192, 244, and 262 each coordinate substrate.

Belongs to the glutaminase family. In terms of assembly, homotetramer.

The enzyme catalyses L-glutamine + H2O = L-glutamate + NH4(+). In Escherichia coli O157:H7, this protein is Glutaminase 2.